A 193-amino-acid polypeptide reads, in one-letter code: Chaperone protein TorD (193 aa).

This sequence belongs to the TorD/DmsD family. TorD subfamily.

Its subcellular location is the cytoplasm. Its function is as follows. Involved in the biogenesis of TorA. Acts on TorA before the insertion of the molybdenum cofactor and, as a result, probably favors a conformation of the apoenzyme that is competent for acquiring the cofactor. The sequence is that of Chaperone protein TorD from Histophilus somni (strain 129Pt) (Haemophilus somnus).